The sequence spans 256 residues: Matrix protein (256 aa).

Positions 1–110 (METYVNKLHE…KLAYDVTTPC (110 aa)) are interaction with M2-1. A nuclear targeting and binding to host importin KPNB1 region spans residues 110-183 (CEIKACSLTC…LNSLENIATT (74 aa)). The Nuclear export signal motif lies at 194-206 (IIPYAGLVLVITV). T205 carries the phosphothreonine modification.

It belongs to the pneumovirinae M protein family. Forms dimers. Forms higher-order oligomers. Interacts with glycoprotein G (via N-terminus). Interacts with protein M2-1; this interaction directs the matrix protein localization to cytoplasmic inclusions comprising viral proteins L, N, P, and M2-1 and mediates the matrix protein association with the nucleocapsid. Interacts with host KPNB1; this interaction mediates nuclear import of the matrix protein early during infection. Interacts with host AP3M1; this interaction plays an essential role in trafficking the matrix protein in host cells. Interacts with host CAV1; this interaction probably facilitates viral budding. Interacts with host CFL1; this interaction probably facilitates viral replication. Interacts with host ZNF502; this interaction probably facilitates viral release. Post-translationally, phosphorylation is important for oligomerization.

The protein resides in the virion. The protein localises to the host cytoplasm. It localises to the host nucleus. Its subcellular location is the host cell membrane. Its function is as follows. Plays a crucial role in virus assembly into filaments and budding. Early in infection, localizes in the nucleus where it inhibits host cell transcription through direct binding to host chromatin. Later in infection, traffics to the cytoplasm through the action of host CRM1 to associate with inclusion bodies, the site of viral transcription and replication. During virus assembly and budding, acts as a bridge between the nucleocapsid and the lipid bilayer. In Human respiratory syncytial virus B (strain B1), this protein is Matrix protein (M).